The sequence spans 219 residues: Uracil-DNA glycosylase (219 aa).

Asp59 (proton acceptor) is an active-site residue.

The protein belongs to the uracil-DNA glycosylase (UDG) superfamily. UNG family.

The protein resides in the cytoplasm. The enzyme catalyses Hydrolyzes single-stranded DNA or mismatched double-stranded DNA and polynucleotides, releasing free uracil.. Functionally, excises uracil residues from the DNA which can arise as a result of misincorporation of dUMP residues by DNA polymerase or due to deamination of cytosine. This chain is Uracil-DNA glycosylase, found in Staphylococcus haemolyticus (strain JCSC1435).